The sequence spans 155 residues: 6,7-dimethyl-8-ribityllumazine synthase (155 aa).

5-amino-6-(D-ribitylamino)uracil is bound by residues Phe23, 57–59 (AFE), and 81–83 (AVI). Position 86 to 87 (86 to 87 (ST)) interacts with (2S)-2-hydroxy-3-oxobutyl phosphate. His89 acts as the Proton donor in catalysis. Phe114 lines the 5-amino-6-(D-ribitylamino)uracil pocket. (2S)-2-hydroxy-3-oxobutyl phosphate is bound at residue Arg128.

It belongs to the DMRL synthase family.

It catalyses the reaction (2S)-2-hydroxy-3-oxobutyl phosphate + 5-amino-6-(D-ribitylamino)uracil = 6,7-dimethyl-8-(1-D-ribityl)lumazine + phosphate + 2 H2O + H(+). The protein operates within cofactor biosynthesis; riboflavin biosynthesis; riboflavin from 2-hydroxy-3-oxobutyl phosphate and 5-amino-6-(D-ribitylamino)uracil: step 1/2. In terms of biological role, catalyzes the formation of 6,7-dimethyl-8-ribityllumazine by condensation of 5-amino-6-(D-ribitylamino)uracil with 3,4-dihydroxy-2-butanone 4-phosphate. This is the penultimate step in the biosynthesis of riboflavin. This is 6,7-dimethyl-8-ribityllumazine synthase from Trichlorobacter lovleyi (strain ATCC BAA-1151 / DSM 17278 / SZ) (Geobacter lovleyi).